The following is a 426-amino-acid chain: Glutamate-1-semialdehyde 2,1-aminomutase (426 aa).

Lys-265 bears the N6-(pyridoxal phosphate)lysine mark.

It belongs to the class-III pyridoxal-phosphate-dependent aminotransferase family. HemL subfamily. As to quaternary structure, homodimer. Pyridoxal 5'-phosphate is required as a cofactor.

The protein localises to the cytoplasm. The enzyme catalyses (S)-4-amino-5-oxopentanoate = 5-aminolevulinate. It functions in the pathway porphyrin-containing compound metabolism; protoporphyrin-IX biosynthesis; 5-aminolevulinate from L-glutamyl-tRNA(Glu): step 2/2. The polypeptide is Glutamate-1-semialdehyde 2,1-aminomutase (Escherichia coli O7:K1 (strain IAI39 / ExPEC)).